A 260-amino-acid polypeptide reads, in one-letter code: Hemin import ATP-binding protein HmuV (260 aa).

An ABC transporter domain is found at 6–242 (LSGRNISMKY…ERIEQVYGYR (237 aa)). 38–45 (GPNGAGKS) is an ATP binding site.

The protein belongs to the ABC transporter superfamily. Heme (hemin) importer (TC 3.A.1.14.5) family. The complex is composed of two ATP-binding proteins (HmuV), two transmembrane proteins (HmuU) and a solute-binding protein (HmuT).

The protein resides in the cell inner membrane. In terms of biological role, part of the ABC transporter complex HmuTUV involved in hemin import. Responsible for energy coupling to the transport system. This Vibrio parahaemolyticus serotype O3:K6 (strain RIMD 2210633) protein is Hemin import ATP-binding protein HmuV.